Consider the following 123-residue polypeptide: Keratin-associated protein 2-2 (123 aa).

Positions 5–112 (CCGSTFSSLS…SVQSPCGQPT (108 aa)) are 11 X 5 AA repeats of C-C-[CDPQRWG]-[APRS]-[CIPSTVD].

The protein belongs to the KRTAP type 2 family. In terms of assembly, interacts with hair keratins.

In the hair cortex, hair keratin intermediate filaments are embedded in an interfilamentous matrix, consisting of hair keratin-associated proteins (KRTAP), which are essential for the formation of a rigid and resistant hair shaft through their extensive disulfide bond cross-linking with abundant cysteine residues of hair keratins. The matrix proteins include the high-sulfur and high-glycine-tyrosine keratins. The sequence is that of Keratin-associated protein 2-2 (KRTAP2-2) from Homo sapiens (Human).